We begin with the raw amino-acid sequence, 237 residues long: Carboxy-S-adenosyl-L-methionine synthase (237 aa).

S-adenosyl-L-methionine is bound by residues Tyr40, 65–67 (GCS), 116–117 (DI), Asn131, and Arg194.

It belongs to the class I-like SAM-binding methyltransferase superfamily. Cx-SAM synthase family. Homodimer.

It catalyses the reaction prephenate + S-adenosyl-L-methionine = carboxy-S-adenosyl-L-methionine + 3-phenylpyruvate + H2O. Functionally, catalyzes the conversion of S-adenosyl-L-methionine (SAM) to carboxy-S-adenosyl-L-methionine (Cx-SAM). This chain is Carboxy-S-adenosyl-L-methionine synthase, found in Dichelobacter nodosus (strain VCS1703A).